A 421-amino-acid chain; its full sequence is Serine hydroxymethyltransferase (421 aa).

Residues leucine 121 and 125–127 (GHL) each bind (6S)-5,6,7,8-tetrahydrofolate. Position 229 is an N6-(pyridoxal phosphate)lysine (lysine 229).

The protein belongs to the SHMT family. Homodimer. Pyridoxal 5'-phosphate serves as cofactor.

The protein localises to the cytoplasm. The catalysed reaction is (6R)-5,10-methylene-5,6,7,8-tetrahydrofolate + glycine + H2O = (6S)-5,6,7,8-tetrahydrofolate + L-serine. It participates in one-carbon metabolism; tetrahydrofolate interconversion. Its pathway is amino-acid biosynthesis; glycine biosynthesis; glycine from L-serine: step 1/1. Functionally, catalyzes the reversible interconversion of serine and glycine with tetrahydrofolate (THF) serving as the one-carbon carrier. This reaction serves as the major source of one-carbon groups required for the biosynthesis of purines, thymidylate, methionine, and other important biomolecules. Also exhibits THF-independent aldolase activity toward beta-hydroxyamino acids, producing glycine and aldehydes, via a retro-aldol mechanism. The protein is Serine hydroxymethyltransferase of Haemophilus influenzae (strain 86-028NP).